Here is a 682-residue protein sequence, read N- to C-terminus: DNA ligase (682 aa).

Residues 42 to 46, 91 to 92, and Glu-124 each bind NAD(+); these read DAEYD and SL. Lys-126 (N6-AMP-lysine intermediate) is an active-site residue. Arg-147, Glu-184, Lys-302, and Lys-326 together coordinate NAD(+). Zn(2+) contacts are provided by Cys-420, Cys-423, Cys-438, and Cys-444. Residues 603 to 682 enclose the BRCT domain; the sequence is IADNPLKGKS…QEFIALTGEN (80 aa).

The protein belongs to the NAD-dependent DNA ligase family. LigA subfamily. It depends on Mg(2+) as a cofactor. Requires Mn(2+) as cofactor.

The catalysed reaction is NAD(+) + (deoxyribonucleotide)n-3'-hydroxyl + 5'-phospho-(deoxyribonucleotide)m = (deoxyribonucleotide)n+m + AMP + beta-nicotinamide D-nucleotide.. In terms of biological role, DNA ligase that catalyzes the formation of phosphodiester linkages between 5'-phosphoryl and 3'-hydroxyl groups in double-stranded DNA using NAD as a coenzyme and as the energy source for the reaction. It is essential for DNA replication and repair of damaged DNA. The sequence is that of DNA ligase from Actinobacillus pleuropneumoniae serotype 3 (strain JL03).